The sequence spans 507 residues: Natural resistance-associated macrophage protein 1 (507 aa).

Residues 1 to 36 (MIRDKNPQRVNRPSYGSISSLPSPAPQPEPSRNTYL) are disordered. The Cytoplasmic segment spans residues 1-39 (MIRDKNPQRVNRPSYGSISSLPSPAPQPEPSRNTYLSEK). Residues 8 to 22 (QRVNRPSYGSISSLP) are compositionally biased toward polar residues. The chain crosses the membrane as a helical span at residues 40 to 60 (IPIPSTEQLLWVLLWATVLGL). The Extracellular segment spans residues 61-123 (LCQRLAARLG…ISFNLLSAGR (63 aa)). A helical transmembrane segment spans residues 124 to 144 (IPLWGGVLITIVDTFFFLFLD). The Cytoplasmic portion of the chain corresponds to 145 to 152 (NYGLRKLE). A helical transmembrane segment spans residues 153-173 (AFFGFLVTIMALTFGYEYVVA). The Extracellular segment spans residues 174-199 (RPSQGALLKGLFLPSCPGCGQPELLQ). Residues 200 to 220 (AVGIVGAIIMPHNIYLHSALV) form a helical membrane-spanning segment. The Cytoplasmic portion of the chain corresponds to 221-245 (KSREVDRTRRGDVREANMYFLTEAT). Residues 246–266 (IALFVSFIINLFVMAVFGQAF) traverse the membrane as a helical segment. Over 267-305 (YQQTNEEAFNICANSSLHNYAKIFPRDNNTVSVDIYQGG) the chain is Extracellular. 2 N-linked (GlcNAc...) asparagine glycosylation sites follow: N280 and N294. Residues 306-326 (VILGCLFGPAALYIWAVGLLA) form a helical membrane-spanning segment. Topologically, residues 327-353 (AGQSSTMTGTYAGQFVMEGFLKLRWSR) are cytoplasmic. Residues 354 to 374 (FARVLLTRSCAILPTVLVAVF) form a helical membrane-spanning segment. Over 375–391 (RDLRDLSGLNDLLNVLQ) the chain is Extracellular. Residues 392 to 412 (SLLLPFAVLPILTFTSMPAVM) traverse the membrane as a helical segment. At 413–422 (QEFANGWLSK) the chain is on the cytoplasmic side. The chain crosses the membrane as a helical span at residues 423–443 (VITSCIMALVCAINLYFVISY). Over 444-451 (LPSLPHPA) the chain is Extracellular. The chain crosses the membrane as a helical span at residues 452–472 (YFGLVALLAIGYLGLTAYLAW). At 473-507 (TCCIAHGAKFLTHSSHQRFLYGLPIEEQEGREGSG) the chain is on the cytoplasmic side.

It belongs to the NRAMP family.

The protein localises to the late endosome membrane. It is found in the lysosome membrane. The enzyme catalyses Zn(2+)(in) + H(+)(out) = Zn(2+)(out) + H(+)(in). The catalysed reaction is Fe(2+)(in) + H(+)(out) = Fe(2+)(out) + H(+)(in). It catalyses the reaction Mn(2+)(in) + H(+)(out) = Mn(2+)(out) + H(+)(in). Functionally, macrophage-specific antiporter that fluxes metal ions in either direction against a proton gradient. Localized to late endosomal lysosomal membranes, delivers bivalent cations from the cytosol into these acidic compartments where they may directly affect antimicrobial activity. Involved in iron metabolism and host natural resistance to infection with intracellular parasites. Pathogen resistance involves sequestration of Fe(2+) and Mn(2+), cofactors of both prokaryotic and eukaryotic catalases and superoxide dismutases, not only to protect the macrophage against its own generation of reactive oxygen species, but to deny the cations to the pathogen for synthesis of its protective enzymes. This Rattus norvegicus (Rat) protein is Natural resistance-associated macrophage protein 1 (Slc11a1).